Reading from the N-terminus, the 227-residue chain is Orotate phosphoribosyltransferase 2 (227 aa).

41–42 (FF) lines the orotate pocket. 5-phospho-alpha-D-ribose 1-diphosphate-binding positions include 79–80 (YK), Arg109, Lys110, Lys113, His115, and 135–143 (DDVMTAGTA). Positions 139 and 167 each coordinate orotate.

The protein belongs to the purine/pyrimidine phosphoribosyltransferase family. PyrE subfamily. Homodimer.

The enzyme catalyses orotidine 5'-phosphate + diphosphate = orotate + 5-phospho-alpha-D-ribose 1-diphosphate. It participates in pyrimidine metabolism; UMP biosynthesis via de novo pathway; UMP from orotate: step 1/2. In terms of biological role, catalyzes the transfer of a ribosyl phosphate group from 5-phosphoribose 1-diphosphate to orotate, leading to the formation of orotidine monophosphate (OMP). The sequence is that of Orotate phosphoribosyltransferase 2 (URA10) from Saccharomyces cerevisiae (strain ATCC 204508 / S288c) (Baker's yeast).